We begin with the raw amino-acid sequence, 339 residues long: DNA-directed RNA polymerase subunit alpha (339 aa).

The tract at residues Met1–Glu233 is alpha N-terminal domain (alpha-NTD). An alpha C-terminal domain (alpha-CTD) region spans residues Lys264–Phe339.

It belongs to the RNA polymerase alpha chain family. In terms of assembly, in plastids the minimal PEP RNA polymerase catalytic core is composed of four subunits: alpha, beta, beta', and beta''. When a (nuclear-encoded) sigma factor is associated with the core the holoenzyme is formed, which can initiate transcription.

The protein localises to the plastid. Its subcellular location is the chloroplast. The catalysed reaction is RNA(n) + a ribonucleoside 5'-triphosphate = RNA(n+1) + diphosphate. Its function is as follows. DNA-dependent RNA polymerase catalyzes the transcription of DNA into RNA using the four ribonucleoside triphosphates as substrates. This Agropyron cristatum (Crested wheatgrass) protein is DNA-directed RNA polymerase subunit alpha.